Reading from the N-terminus, the 144-residue chain is Large ribosomal subunit protein uL15 (144 aa).

A disordered region spans residues 1–51; that stretch reads MQLNTLSPAQGEKKSRKRVGRGIGSGIGKTCGSGHKGQKSRSGGFNKIGFE. The span at 21 to 35 shows a compositional bias: gly residues; sequence RGIGSGIGKTCGSGH.

This sequence belongs to the universal ribosomal protein uL15 family. As to quaternary structure, part of the 50S ribosomal subunit.

Its function is as follows. Binds to the 23S rRNA. In Vesicomyosocius okutanii subsp. Calyptogena okutanii (strain HA), this protein is Large ribosomal subunit protein uL15.